Consider the following 807-residue polypeptide: MAAKLTRLHSLRERLGATFSSHPNELIALFSRYVHQGKGMLQRHQLLAEFDALFESDKEKYAPFEDILRAAQEAIVLPPWVALAIRPRTGVWDYIRVNVSELAVEELTVSEYLAFKEQLVDEHASRKFVLELDFEPFNASFPRPSMSKSYGKGVQFLNRHLSSKLFQDKESLYPLLNFLKAHNYKGTTMILNDRIQSLRGLQSALRKAEEYLVSIPEDTPSSEFNHRFQELGLEKGWGDTAKRVHDTIHLLLDLLEAPDPASLEKFLGTIPMMFNVVILSPHGYFAQSNVLGYPDTGGQVVYILDQVRALENEMLLRIKQQGLDITPKILIVTRLLPDAVGTTCGQRLEKVIGTEHTDILRVPFRTENGIRKWISRFDVWPYLETYTEDVANELMREMQTKPDLIIGNYSDGNLVATLLAHKLGVTQCTIAHALEKTKYPNSDIYLDKFDSQYHFSCQFTADLIAMNHTDFIITSTFQEIAGSKDSVGQYESHIAFTLPDLYRVVHGIDVFDPKFNIVSPGADMTVYFPYTETDKRLTAFHSEIEELLYSDVENDEHKFVLKDRNKPIIFSMARLDRVKNMTGLVEMYGKNAHLKDLANLVIVAGDHGKESKDREEQAEFKRMYSLIEEYKLKGHIRWISAQMNRVRNGELYRYICDTKGAFVQPAFYEAFGLTVIEAMTCGLPTIATCHGGPAEIIVDGVSGLHIDPYHSDKAADILVNFFEKSTADPSYWDKISQGGLKRIYEKYTWKLYSERLMTLTGVYGFWKYVSNLERRETRRYLEMFYALKYRSLAAAVPLAVDGESSGN.

Positions 272–748 are GT-B glycosyltransferase; the sequence is MMFNVVILSP…GLKRIYEKYT (477 aa).

The protein belongs to the glycosyltransferase 1 family. Plant sucrose synthase subfamily. In terms of assembly, forms homotetramers. In endosperm it forms both homotetramers and heterotetramers with SS2, all three possible heterotetramers are formed. Highly expressed in developing endosperm and in roots and, at lower levels, in coleoptiles and aleurone. In 3 day old roots it is detected in cap cells and along the vascular strand, starting just after the meristemic region. In 9 day old leaves it is found in the phloem. In seeds it is distributed throughout the endosperm and also found in the assimilate-unloading tissues, the nucellar projection, the vascular area and at a high concentration in the chalazal region.

The catalysed reaction is an NDP-alpha-D-glucose + D-fructose = a ribonucleoside 5'-diphosphate + sucrose + H(+). Its function is as follows. Sucrose-cleaving enzyme that provides UDP-glucose and fructose for various metabolic pathways. This is Sucrose synthase 1 (SS1) from Hordeum vulgare (Barley).